The following is a 266-amino-acid chain: Auxin-responsive protein IAA21 (266 aa).

The EAR-like (transcriptional repression) motif lies at L24–L28. The tract at residues G27–L50 is disordered. The PB1 domain maps to C146–G248.

This sequence belongs to the Aux/IAA family. Homodimers and heterodimers. In terms of tissue distribution, highly expressed in flowers. Expressed in roots and seedlings.

It localises to the nucleus. Its function is as follows. Aux/IAA proteins are short-lived transcriptional factors that function as repressors of early auxin response genes at low auxin concentrations. This Oryza sativa subsp. japonica (Rice) protein is Auxin-responsive protein IAA21 (IAA21).